The sequence spans 93 residues: MGTKCYSKLRYVVVLVLLLFVFPCSLSQSAPSSVTGRRLMGIYMPNGGIIAGSSPSGQAPNINNNYHGRRLMISEARPSKSKKGGGREPESPG.

An N-terminal signal peptide occupies residues 1–27; sequence MGTKCYSKLRYVVVLVLLLFVFPCSLS. 2 consecutive short sequence motifs (SCOOP motif) follow at residues 48–62 and 73–87; these read GIIAGSSPSGQAPNI and ISEARPSKSKKGGGR. Residues 52-93 are disordered; it reads GSSPSGQAPNINNNYHGRRLMISEARPSKSKKGGGREPESPG. The segment covering 53–66 has biased composition (polar residues); it reads SSPSGQAPNINNNY. 2 short sequence motifs (sxS motif essential for MIK2 binding) span residues 54-56 and 79-81; these read SPS and SKS.

This sequence belongs to the serine rich endogenous peptide (SCOOP) phytocytokine family. As to quaternary structure, interacts with MIK2 (via extracellular leucine-rich repeat domain); this interaction triggers the formation of complex between MIK2 and the BAK1/SERK3 and SERK4 coreceptors, and subsequent BAK1 activation by phosphorylation. In terms of tissue distribution, mostly expressed in seedlings shoots, and, to a lower extent, in roots.

The protein localises to the cell membrane. It is found in the secreted. Its subcellular location is the extracellular space. It localises to the apoplast. Functionally, brassicaceae-specific phytocytokine (plant endogenous peptide released into the apoplast) perceived by MIK2 in a BAK1/SERK3 and SERK4 coreceptors-dependent manner, that modulates various physiological and antimicrobial processes including growth prevention and reactive oxygen species (ROS) response regulation. Inhibits root growth. The protein is Serine rich endogenous peptide 6 of Arabidopsis thaliana (Mouse-ear cress).